Here is a 229-residue protein sequence, read N- to C-terminus: Endonuclease V (229 aa).

Residues aspartate 43 and aspartate 111 each contribute to the Mg(2+) site.

It belongs to the endonuclease V family. Mg(2+) is required as a cofactor.

It is found in the cytoplasm. The catalysed reaction is Endonucleolytic cleavage at apurinic or apyrimidinic sites to products with a 5'-phosphate.. Functionally, DNA repair enzyme involved in the repair of deaminated bases. Selectively cleaves double-stranded DNA at the second phosphodiester bond 3' to a deoxyinosine leaving behind the intact lesion on the nicked DNA. In Rippkaea orientalis (strain PCC 8801 / RF-1) (Cyanothece sp. (strain PCC 8801)), this protein is Endonuclease V.